We begin with the raw amino-acid sequence, 281 residues long: Pantothenate synthetase (281 aa).

Methionine 17–histidine 24 contacts ATP. Histidine 24 acts as the Proton donor in catalysis. Residue glutamine 48 coordinates (R)-pantoate. Residue glutamine 48 coordinates beta-alanine. Residue glycine 134–aspartate 137 participates in ATP binding. Glutamine 140 serves as a coordination point for (R)-pantoate. Residues valine 163 and leucine 176–arginine 179 contribute to the ATP site.

The protein belongs to the pantothenate synthetase family. As to quaternary structure, homodimer.

It is found in the cytoplasm. It carries out the reaction (R)-pantoate + beta-alanine + ATP = (R)-pantothenate + AMP + diphosphate + H(+). It participates in cofactor biosynthesis; (R)-pantothenate biosynthesis; (R)-pantothenate from (R)-pantoate and beta-alanine: step 1/1. In terms of biological role, catalyzes the condensation of pantoate with beta-alanine in an ATP-dependent reaction via a pantoyl-adenylate intermediate. The polypeptide is Pantothenate synthetase (Deinococcus radiodurans (strain ATCC 13939 / DSM 20539 / JCM 16871 / CCUG 27074 / LMG 4051 / NBRC 15346 / NCIMB 9279 / VKM B-1422 / R1)).